Consider the following 361-residue polypeptide: Protein TIFY 8 (361 aa).

4 disordered regions span residues 53–78, 113–134, 190–232, and 268–361; these read NKAAKAAMTPSTASASSAGGLGGLSS, RFSGNKRSNSDSHFTTQEHPET, QTAA…RKDL, and SGGS…KEAT. Over residues 56–78 the composition is skewed to low complexity; sequence AKAAMTPSTASASSAGGLGGLSS. Polar residues-rich tracts occupy residues 113 to 127 and 208 to 232; these read RFSGNKRSNSDSHFT and SSFTMPNSSKLESFAPSNTGNRKDL. The Tify domain maps to 232-267; sequence LASSTKQMTIFYGGQAHVFDDVHPNKADVIMALAGS. The segment covering 333–361 has biased composition (basic and acidic residues); the sequence is GREHQGSIISRGRDIRDPVHRSDPEKEAT.

The protein belongs to the TIFY/JAZ family. As to quaternary structure, interacts with AFPH2/NINJA. Post-translationally, ubiquitinated. Targeted for degradation by the SCF(COI1) E3 ubiquitin ligase-proteasome pathway during jasmonate signaling.

Its subcellular location is the nucleus. Functionally, repressor of jasmonate responses. The sequence is that of Protein TIFY 8 from Arabidopsis thaliana (Mouse-ear cress).